Consider the following 463-residue polypeptide: Chromosomal replication initiator protein DnaA (463 aa).

The segment at 1–83 (MNTNQIILTD…LQLFQHYNNT (83 aa)) is domain I, interacts with DnaA modulators. The interval 83–124 (TIKSIDIITKELPGTTQTVIELPTKTFADIGSSELNSENIFS) is domain II. The tract at residues 125–343 (TLDVRFTFDN…GALNKVIAHS (219 aa)) is domain III, AAA+ region. ATP contacts are provided by Gly171, Gly173, Lys174, and Thr175. The segment at 344 to 463 (NFTLKEITLE…INLLMKILQH (120 aa)) is domain IV, binds dsDNA.

The protein belongs to the DnaA family. As to quaternary structure, oligomerizes as a right-handed, spiral filament on DNA at oriC.

The protein resides in the cytoplasm. Functionally, plays an essential role in the initiation and regulation of chromosomal replication. ATP-DnaA binds to the origin of replication (oriC) to initiate formation of the DNA replication initiation complex once per cell cycle. Binds the DnaA box (a 9 base pair repeat at the origin) and separates the double-stranded (ds)DNA. Forms a right-handed helical filament on oriC DNA; dsDNA binds to the exterior of the filament while single-stranded (ss)DNA is stabiized in the filament's interior. The ATP-DnaA-oriC complex binds and stabilizes one strand of the AT-rich DNA unwinding element (DUE), permitting loading of DNA polymerase. After initiation quickly degrades to an ADP-DnaA complex that is not apt for DNA replication. Binds acidic phospholipids. This is Chromosomal replication initiator protein DnaA from Rickettsia akari (strain Hartford).